The primary structure comprises 81 residues: Beta-catenin-interacting protein 1 (81 aa).

Ser-59 is modified (phosphoserine).

Belongs to the CTNNBIP1 family. In terms of assembly, binds CTNNB1.

The protein resides in the cytoplasm. Its subcellular location is the nucleus. Prevents the interaction between CTNNB1 and TCF family members, and acts as a negative regulator of the Wnt signaling pathway. In Homo sapiens (Human), this protein is Beta-catenin-interacting protein 1 (CTNNBIP1).